Consider the following 387-residue polypeptide: O-methyltransferase asqD (387 aa).

Asp252 contributes to the S-adenosyl-L-methionine binding site. His294 functions as the Proton acceptor in the catalytic mechanism.

It belongs to the class I-like SAM-binding methyltransferase superfamily. Cation-independent O-methyltransferase family.

It participates in secondary metabolite biosynthesis. Its pathway is alkaloid biosynthesis. It functions in the pathway mycotoxin biosynthesis. In terms of biological role, O-methyltransferase; part of the gene cluster that mediates the biosynthesis of the aspoquinolone mycotoxins. The role of asqD within the aspoquinolone pathway has still to be determined. The first step of the pathway is catalyzed by the nonribosomal peptide synthetase asqK that condenses anthranilic acid and O-methyl-L-tyrosine to produce 4'-methoxycyclopeptin. 4'-methoxycyclopeptin is then converted to 4'-methoxydehydrocyclopeptin by the ketoglutarate-dependent dioxygenase asqJ. AsqJ also converts its first product 4'-methoxydehydrocyclopeptin to 4'-methoxycyclopenin. The following conversion of 4'-methoxycyclopenin into 4'-methoxyviridicatin is catalyzed by the cyclopenase asqI. 4'-methoxyviridicatin is the precursor of quinolone natural products, and is further converted to quinolinone B. The prenyltransferase asqH1 then catalyzes the canonical Friedel-Crafts alkylation of quinolinone B with dimethylallyl cation to yield dimethylallyl quinolone, which is subjected to FAD-dependent dehydrogenation by the FAD-linked oxidoreductase asqF to yield conjugated aryl diene. The delta(3') double bond then serves as the site of the second alkylation with DMAPP catalyzed by the prenyltransferase asqH2 to yield a carbenium ion intermediate, which can be attacked by H(2)O to yield a styrenyl quinolone containing a C3'-hydroxyprenyl chain. The FAD-dependent monooxygenase asqG performs epoxidation of the terminal C7'-C8' olefin. Finally, after dehydratation of the epoxide at C3 by asqC, the quinolone epoxide rearrangement protein asqO catalyzes an enzymatic 3-exo-tet cyclization to yield the cyclopropyl-THF ring system in aspoquinolone. In Emericella nidulans (strain FGSC A4 / ATCC 38163 / CBS 112.46 / NRRL 194 / M139) (Aspergillus nidulans), this protein is O-methyltransferase asqD.